The primary structure comprises 93 residues: Small ribosomal subunit protein uS19 (93 aa).

It belongs to the universal ribosomal protein uS19 family.

In terms of biological role, protein S19 forms a complex with S13 that binds strongly to the 16S ribosomal RNA. This chain is Small ribosomal subunit protein uS19, found in Agathobacter rectalis (strain ATCC 33656 / DSM 3377 / JCM 17463 / KCTC 5835 / VPI 0990) (Eubacterium rectale).